The chain runs to 117 residues: MFNPYPQKKKRQTRNYTGPWRKTPGRLLGLLLIRFYQITLSGFIGNQCRHLPTCSEYTYEAIARHGLWAGAWMGFFRIIRCGPFGTHGFEPVPTSLGNSYCFYKPWCYWKISTKHNK.

It belongs to the UPF0161 family.

The protein resides in the cell inner membrane. In terms of biological role, could be involved in insertion of integral membrane proteins into the membrane. The polypeptide is Putative membrane protein insertion efficiency factor (Bartonella henselae (strain ATCC 49882 / DSM 28221 / CCUG 30454 / Houston 1) (Rochalimaea henselae)).